The primary structure comprises 2148 residues: Polyketide synthase 1 (2148 aa).

Residues 19–261 (FIFGDQSSCN…TPLAVHAPYH (243 aa)) are N-terminal acylcarrier protein transacylase domain (SAT). Residues 394-829 (ESKIAIIGMS…GGNTALLVED (436 aa)) enclose the Ketosynthase family 3 (KS3) domain. Active-site for beta-ketoacyl synthase activity residues include cysteine 566, histidine 701, and histidine 745. The malonyl-CoA:ACP transacylase (MAT) domain stretch occupies residues 929–1233 (AFVFSGQGSQ…PSLMRNKDGW (305 aa)). The active-site For acyl/malonyl transferase activity is the serine 1018. Positions 1310 to 1624 (TASVHRIVHE…RKVLNTAMPP (315 aa)) are product template (PT) domain. An N-terminal hotdog fold region spans residues 1314–1447 (HRIVHESVDK…SSLHFEQPKV (134 aa)). The 306-residue stretch at 1314 to 1619 (HRIVHESVDK…FQGIPRKVLN (306 aa)) folds into the PKS/mFAS DH domain. Residue histidine 1346 is the Proton acceptor; for dehydratase activity of the active site. A C-terminal hotdog fold region spans residues 1474 to 1619 (LNSRMSSGVI…FQGIPRKVLN (146 aa)). Aspartate 1533 acts as the Proton donor; for dehydratase activity in catalysis. Positions 1619–1657 (NTAMPPPKSQNEAPVRSAPAKPAAKPPKSASSEHSGHFA) are disordered. The span at 1635 to 1650 (SAPAKPAAKPPKSASS) shows a compositional bias: low complexity. A Carrier 1 domain is found at 1678–1752 (RNPMLAVFKI…DLATHLGLDT (75 aa)). Position 1712 is an O-(pantetheine 4'-phosphoryl)serine (serine 1712). Low complexity predominate over residues 1755–1790 (SDQSSGQSSSSGGLSPRSDSIGEITSSATTPPSLSP). A disordered region spans residues 1755-1796 (SDQSSGQSSSSGGLSPRSDSIGEITSSATTPPSLSPRGSVSG). The Carrier 2 domain occupies 1793 to 1870 (SVSGSQCKDV…SFKHMFQQGH (78 aa)). Position 1830 is an O-(pantetheine 4'-phosphoryl)serine (serine 1830). Residues 1882 to 2146 (LKQYRATSTL…ERVAAFIRST (265 aa)) are thioesterase (TE) domain. The active-site For thioesterase activity is serine 1973.

In terms of biological role, polyketide synthase; part of the Pks1 gene cluster that mediates the biosynthesis of an anthraquinone derivative pigment that contributes to conidial pigmentation that provides protection from UV radiation, heat and cold stress. The polyketide synthase Pks1 produces 1-acetyl-2,4,6,8-tetrahydroxy-9,10-anthraquinone though condensation of acetyl-CoA with malonyl-CoA. The dehydratase EthD and the laccase Mlac1 further convert the anthraquinone derivative into the final conidial pigment. This chain is Polyketide synthase 1, found in Metarhizium guizhouense (strain ARSEF 977).